The primary structure comprises 198 residues: Holliday junction resolvase RecU (198 aa).

A disordered region spans residues 1–21; it reads MVNYPHKLSSQKRQPSLSQPK. Residues 11 to 21 show a composition bias toward polar residues; the sequence is QKRQPSLSQPK. Threonine 81, aspartate 83, glutamate 96, and glutamine 115 together coordinate Mg(2+).

The protein belongs to the RecU family. Mg(2+) serves as cofactor.

The protein localises to the cytoplasm. It catalyses the reaction Endonucleolytic cleavage at a junction such as a reciprocal single-stranded crossover between two homologous DNA duplexes (Holliday junction).. Endonuclease that resolves Holliday junction intermediates in genetic recombination. Cleaves mobile four-strand junctions by introducing symmetrical nicks in paired strands. Promotes annealing of linear ssDNA with homologous dsDNA. Required for DNA repair, homologous recombination and chromosome segregation. The protein is Holliday junction resolvase RecU of Streptococcus pneumoniae (strain Taiwan19F-14).